The chain runs to 120 residues: MSYQSLLTHRCDIYHLQEKKENRKQKFGVPVEDVQPVFSYPDEPDIENQPCYFTEKSQSIIQQESNVSIYQSFLVHFPATADIRVNDRAVWDGTAYKLQKPRKIRNHHWEVTAVREVEYL.

It to B.subtilis XkdH.

This is an uncharacterized protein from Bacillus subtilis (strain 168).